Here is a 493-residue protein sequence, read N- to C-terminus: Tripartite motif-containing protein 5 (493 aa).

Residue Ala2 is modified to N-acetylalanine. The segment at 15-59 (CPICLELLTQPLSLDCGHSFCQACLTANHKKSMLDKGESSCPVCR) adopts an RING-type zinc-finger fold. At Ser86 the chain carries Phosphoserine. The B box-type zinc finger occupies 90–132 (QKVDHCARHGEKLLLFCQEDGKVICWLCERSQEHRGHHTFLTE). Zn(2+) contacts are provided by Cys95, His98, Cys117, and His123. Residues 130 to 241 (LTEEVAREYQ…ISDLEHRLQG (112 aa)) adopt a coiled-coil conformation. The segment at 185-198 (FEQLRDILDWEESN) is required for interaction with GABARAP and for autophagy. The B30.2/SPRY domain maps to 281–493 (LKGMLEVFRE…VPMTLCSPSS (213 aa)).

This sequence belongs to the TRIM/RBCC family. Can form homodimers and homotrimers. In addition to lower-order dimerization, also exhibits a higher-order multimerization and both low- and high-order multimerizations are essential for its restriction activity. Isoform Delta interacts with BTBD1 and BTBD2. Interacts with PSMC4, PSMC5, PSMD7 and HSPA8/HSC70. Interacts (via B30.2/SPRY domain) with HSPA1A/B. Interacts with PSMC2, MAP3K7/TAK1, TAB2 and TAB3. Interacts with SQSTM1. Interacts with TRIM6 and TRIM34. Interacts with ULK1 (phosphorylated form), GABARAP, GABARAPL1, GABARAPL2, MAP1LC3A, MAP1LC3C and BECN1. Post-translationally, degraded in a proteasome-independent fashion in the absence of viral infection but in a proteasome-dependent fashion following exposure to restriction sensitive virus. In terms of processing, autoubiquitinated in a RING finger- and UBE2D2-dependent manner. Monoubiquitinated by TRIM21. Deubiquitinated by Yersinia YopJ. Ubiquitination may not lead to proteasomal degradation.

It is found in the cytoplasm. The protein resides in the nucleus. It catalyses the reaction S-ubiquitinyl-[E2 ubiquitin-conjugating enzyme]-L-cysteine + [acceptor protein]-L-lysine = [E2 ubiquitin-conjugating enzyme]-L-cysteine + N(6)-ubiquitinyl-[acceptor protein]-L-lysine.. It functions in the pathway protein modification; protein ubiquitination. Functionally, capsid-specific restriction factor that prevents infection from non-host-adapted retroviruses. Blocks viral replication early in the life cycle, after viral entry but before reverse transcription. In addition to acting as a capsid-specific restriction factor, also acts as a pattern recognition receptor that activates innate immune signaling in response to the retroviral capsid lattice. Binding to the viral capsid triggers its E3 ubiquitin ligase activity, and in concert with the heterodimeric ubiquitin conjugating enzyme complex UBE2V1-UBE2N (also known as UBC13-UEV1A complex) generates 'Lys-63'-linked polyubiquitin chains, which in turn are catalysts in the autophosphorylation of the MAP3K7/TAK1 complex (includes TAK1, TAB2, and TAB3). Activation of the MAP3K7/TAK1 complex by autophosphorylation results in the induction and expression of NF-kappa-B and MAPK-responsive inflammatory genes, thereby leading to an innate immune response in the infected cell. Restricts infection by N-tropic murine leukemia virus (N-MLV), equine infectious anemia virus (EIAV), simian immunodeficiency virus of macaques (SIVmac), feline immunodeficiency virus (FIV), and bovine immunodeficiency virus (BIV). Plays a role in regulating autophagy through activation of autophagy regulator BECN1 by causing its dissociation from its inhibitors BCL2 and TAB2. Also plays a role in autophagy by acting as a selective autophagy receptor which recognizes and targets HIV-1 capsid protein p24 for autophagic destruction. The sequence is that of Tripartite motif-containing protein 5 (TRIM5) from Homo sapiens (Human).